Consider the following 373-residue polypeptide: 3 beta-hydroxysteroid dehydrogenase/Delta 5--&gt;4-isomerase type 1 (373 aa).

NADP(+) is bound by residues 10–15 (GAGGFV), tyrosine 155, and lysine 159. Catalysis depends on lysine 159, which acts as the Proton donor. Residues 288–308 (LPLLYWLAFLLETVSFLLRPV) form a helical membrane-spanning segment.

This sequence belongs to the 3-beta-HSD family. In terms of tissue distribution, steroidogenic tissues (includes testes, ovaries and adrenal glands).

The protein resides in the endoplasmic reticulum membrane. Its subcellular location is the mitochondrion membrane. It carries out the reaction a 3beta-hydroxy-Delta(5)-steroid + NAD(+) = a 3-oxo-Delta(5)-steroid + NADH + H(+). The catalysed reaction is pregnenolone + NAD(+) = pregn-5-ene-3,20-dione + NADH + H(+). It catalyses the reaction 3beta-hydroxyandrost-5-en-17-one + NAD(+) = androst-5-ene-3,17-dione + NADH + H(+). The enzyme catalyses androst-5-en-3beta,17beta-diol + NAD(+) = 17beta-hydroxy-androst-5-en-3-one + NADH + H(+). It carries out the reaction a 3beta-hydroxysteroid + NADP(+) = a 3-oxosteroid + NADPH + H(+). The catalysed reaction is 5alpha-androstane-3beta,17beta-diol + NADP(+) = 17beta-hydroxy-5alpha-androstan-3-one + NADPH + H(+). It catalyses the reaction 3beta-hydroxy-5alpha-androstan-17-one + NADP(+) = 5alpha-androstan-3,17-dione + NADPH + H(+). The enzyme catalyses a 3-oxo-Delta(5)-steroid = a 3-oxo-Delta(4)-steroid. It carries out the reaction pregn-5-ene-3,20-dione = progesterone. The catalysed reaction is androst-5-ene-3,17-dione = androst-4-ene-3,17-dione. It catalyses the reaction 17beta-hydroxy-androst-5-en-3-one = testosterone. The enzyme catalyses 5alpha-androstane-3beta,17beta-diol + NAD(+) = 17beta-hydroxy-5alpha-androstan-3-one + NADH + H(+). Its pathway is steroid hormone biosynthesis. It participates in steroid metabolism. Its function is as follows. A bifunctional enzyme responsible for the oxidation and isomerization of 3beta-hydroxy-Delta(5)-steroid precursors to 3-oxo-Delta(4)-steroids, an essential step in steroid hormone biosynthesis. Specifically catalyzes the conversion of pregnenolone to progesterone, 17alpha-hydroxypregnenolone to 17alpha-hydroxyprogesterone, dehydroepiandrosterone (DHEA) to 4-androstenedione, and androstenediol to testosterone. Additionally, catalyzes the interconversion between 3beta-hydroxy and 3-oxo-5alpha-androstane steroids controlling the bioavalability of the active forms. Specifically converts dihydrotestosterone to its inactive form 5alpha-androstanediol, that does not bind androgen receptor/AR. Also converts androstanedione, a precursor of testosterone and estrone, to epiandrosterone. Expected to use NAD(+) as preferred electron donor for the 3-beta-hydroxy-steroid dehydrogenase activity and NADPH for the 3-ketosteroid reductase activity. The chain is 3 beta-hydroxysteroid dehydrogenase/Delta 5--&gt;4-isomerase type 1 from Mus musculus (Mouse).